The primary structure comprises 209 residues: Guanylate kinase (209 aa).

The Guanylate kinase-like domain occupies 7-185 (GNLYIVAAPS…AAMELQSIVI (179 aa)). Residue 14–21 (APSGGGKT) coordinates ATP.

It belongs to the guanylate kinase family.

It localises to the cytoplasm. It carries out the reaction GMP + ATP = GDP + ADP. Its function is as follows. Essential for recycling GMP and indirectly, cGMP. This Legionella pneumophila (strain Lens) protein is Guanylate kinase.